Consider the following 127-residue polypeptide: Ribonuclease P protein component (127 aa).

The tract at residues 99-127 (ALSASLRQQLRDGIDRSARRQEPAAERQR) is disordered. A compositionally biased stretch (basic and acidic residues) spans 107–127 (QLRDGIDRSARRQEPAAERQR).

The protein belongs to the RnpA family. In terms of assembly, consists of a catalytic RNA component (M1 or rnpB) and a protein subunit.

It carries out the reaction Endonucleolytic cleavage of RNA, removing 5'-extranucleotides from tRNA precursor.. Its function is as follows. RNaseP catalyzes the removal of the 5'-leader sequence from pre-tRNA to produce the mature 5'-terminus. It can also cleave other RNA substrates such as 4.5S RNA. The protein component plays an auxiliary but essential role in vivo by binding to the 5'-leader sequence and broadening the substrate specificity of the ribozyme. This chain is Ribonuclease P protein component, found in Mycobacteroides abscessus (strain ATCC 19977 / DSM 44196 / CCUG 20993 / CIP 104536 / JCM 13569 / NCTC 13031 / TMC 1543 / L948) (Mycobacterium abscessus).